The primary structure comprises 379 residues: Arginine biosynthesis bifunctional protein ArgJ (379 aa).

Substrate is bound by residues T140, K160, T171, E249, N374, and T379. T171 functions as the Nucleophile in the catalytic mechanism.

It belongs to the ArgJ family. In terms of assembly, heterotetramer of two alpha and two beta chains.

It localises to the cytoplasm. It catalyses the reaction N(2)-acetyl-L-ornithine + L-glutamate = N-acetyl-L-glutamate + L-ornithine. The catalysed reaction is L-glutamate + acetyl-CoA = N-acetyl-L-glutamate + CoA + H(+). It functions in the pathway amino-acid biosynthesis; L-arginine biosynthesis; L-ornithine and N-acetyl-L-glutamate from L-glutamate and N(2)-acetyl-L-ornithine (cyclic): step 1/1. Its pathway is amino-acid biosynthesis; L-arginine biosynthesis; N(2)-acetyl-L-ornithine from L-glutamate: step 1/4. Catalyzes two activities which are involved in the cyclic version of arginine biosynthesis: the synthesis of N-acetylglutamate from glutamate and acetyl-CoA as the acetyl donor, and of ornithine by transacetylation between N(2)-acetylornithine and glutamate. The protein is Arginine biosynthesis bifunctional protein ArgJ of Archaeoglobus fulgidus (strain ATCC 49558 / DSM 4304 / JCM 9628 / NBRC 100126 / VC-16).